The following is a 244-amino-acid chain: Phosphoadenosine 5'-phosphosulfate reductase (244 aa).

Cys239 serves as the catalytic Nucleophile; cysteine thiosulfonate intermediate.

This sequence belongs to the PAPS reductase family. CysH subfamily.

The protein resides in the cytoplasm. It carries out the reaction [thioredoxin]-disulfide + sulfite + adenosine 3',5'-bisphosphate + 2 H(+) = [thioredoxin]-dithiol + 3'-phosphoadenylyl sulfate. Its pathway is sulfur metabolism; hydrogen sulfide biosynthesis; sulfite from sulfate: step 3/3. Catalyzes the formation of sulfite from phosphoadenosine 5'-phosphosulfate (PAPS) using thioredoxin as an electron donor. The polypeptide is Phosphoadenosine 5'-phosphosulfate reductase (Salmonella agona (strain SL483)).